Here is a 206-residue protein sequence, read N- to C-terminus: Imidazoleglycerol-phosphate dehydratase (206 aa).

The protein belongs to the imidazoleglycerol-phosphate dehydratase family.

The protein localises to the cytoplasm. It catalyses the reaction D-erythro-1-(imidazol-4-yl)glycerol 3-phosphate = 3-(imidazol-4-yl)-2-oxopropyl phosphate + H2O. It participates in amino-acid biosynthesis; L-histidine biosynthesis; L-histidine from 5-phospho-alpha-D-ribose 1-diphosphate: step 6/9. The sequence is that of Imidazoleglycerol-phosphate dehydratase from Synechococcus sp. (strain JA-3-3Ab) (Cyanobacteria bacterium Yellowstone A-Prime).